A 273-amino-acid chain; its full sequence is Large ribosomal subunit protein uL2c (273 aa).

The span at 1–31 shows a compositional bias: polar residues; the sequence is MAIHLSKTSSPSTRNGAVNSQVKSNSRNRLI. 2 disordered regions span residues 1 to 53 and 222 to 273; these read MAIH…GHRG and MNPV…RRSK.

The protein belongs to the universal ribosomal protein uL2 family. As to quaternary structure, part of the 50S ribosomal subunit.

It localises to the plastid. The protein localises to the chloroplast. This chain is Large ribosomal subunit protein uL2c (rpl2), found in Pisum sativum (Garden pea).